The sequence spans 122 residues: Large ribosomal subunit protein uL14 (122 aa).

Belongs to the universal ribosomal protein uL14 family. In terms of assembly, part of the 50S ribosomal subunit. Forms a cluster with proteins L3 and L19. In the 70S ribosome, L14 and L19 interact and together make contacts with the 16S rRNA in bridges B5 and B8.

Functionally, binds to 23S rRNA. Forms part of two intersubunit bridges in the 70S ribosome. The polypeptide is Large ribosomal subunit protein uL14 (Syntrophomonas wolfei subsp. wolfei (strain DSM 2245B / Goettingen)).